Reading from the N-terminus, the 1060-residue chain is Positive regulator of purine utilization (1060 aa).

Positions Met-1–Ala-15 are enriched in polar residues. The tract at residues Met-1–Glu-48 is disordered. A DNA-binding region (zn(2)-C6 fungal-type) is located at residues Cys-67–Cys-94. Disordered stretches follow at residues Glu-163 to Asp-207, Ser-251 to Asp-282, Ala-367 to Tyr-391, Val-811 to Met-862, and Arg-877 to Met-969. Basic and acidic residues-rich tracts occupy residues Ser-170–Asn-182, Lys-189–Asp-207, and Gly-260–Pro-269. The segment covering Ala-272–Asp-282 has biased composition (polar residues). Residues Ala-367–Ser-377 are compositionally biased toward basic and acidic residues. The span at Val-811–Tyr-831 shows a compositional bias: polar residues. Low complexity-rich tracts occupy residues Ser-832–Arg-859 and Pro-930–Gly-952.

It localises to the nucleus. In terms of biological role, mediates the induction of a number of unlinked genes involved in purine utilization. Binds to the consensus sequence 5'-TCGGNNNNNNCCGA-3'. This Emericella nidulans (strain FGSC A4 / ATCC 38163 / CBS 112.46 / NRRL 194 / M139) (Aspergillus nidulans) protein is Positive regulator of purine utilization (uaY).